A 441-amino-acid chain; its full sequence is Trigger factor (441 aa).

The PPIase FKBP-type domain occupies 175–257 (GDFISLSLHV…VNAVIEVVAP (83 aa)).

The protein belongs to the FKBP-type PPIase family. Tig subfamily.

It is found in the cytoplasm. The catalysed reaction is [protein]-peptidylproline (omega=180) = [protein]-peptidylproline (omega=0). Its function is as follows. Involved in protein export. Acts as a chaperone by maintaining the newly synthesized protein in an open conformation. Functions as a peptidyl-prolyl cis-trans isomerase. The protein is Trigger factor of Chlamydia abortus (strain DSM 27085 / S26/3) (Chlamydophila abortus).